A 397-amino-acid chain; its full sequence is Phosphoglycerate kinase (397 aa).

Substrate-binding positions include aspartate 21–asparagine 23, arginine 37, histidine 60–arginine 63, arginine 119, and arginine 152. Residues lysine 203, glycine 294, glutamate 325, and glycine 354–serine 357 each bind ATP.

It belongs to the phosphoglycerate kinase family. Monomer.

The protein localises to the cytoplasm. It catalyses the reaction (2R)-3-phosphoglycerate + ATP = (2R)-3-phospho-glyceroyl phosphate + ADP. It functions in the pathway carbohydrate degradation; glycolysis; pyruvate from D-glyceraldehyde 3-phosphate: step 2/5. This Chlorobium phaeobacteroides (strain BS1) protein is Phosphoglycerate kinase.